Reading from the N-terminus, the 537-residue chain is Biotin carboxylase, chloroplastic (537 aa).

The N-terminal 71 residues, 1–71 (MDASMITNSK…ATSGGLGVTC (71 aa)), are a transit peptide targeting the chloroplast. ATP is bound by residues Lys-188, Lys-230, 236–237 (GG), 272–275 (EKFV), and His-280. Residues 192–389 (RETMKNAGVP…LIEEQIRVAM (198 aa)) form the ATP-grasp domain. Residue Lys-309 coordinates hydrogencarbonate. Positions 347 and 360 each coordinate ATP. Residues Glu-347, Glu-360, and Asn-362 each contribute to the Mg(2+) site. Mn(2+)-binding residues include Glu-347, Glu-360, and Asn-362. Arg-364, Val-367, and Arg-410 together coordinate hydrogencarbonate. The active site involves Arg-364. Arg-410 contacts biotin.

As to quaternary structure, acetyl-CoA carboxylase is a heterohexamer composed of biotin carboxyl carrier protein, biotin carboxylase and two subunits each of ACCase subunit alpha and ACCase plastid-coded subunit beta (accD). The cofactor is Mg(2+). It depends on Mn(2+) as a cofactor. Accumulates in fatty acids synthesizing tissues. Mostly expressed in siliques, developing leaves, and flowers, present in roots and embryos (especially at torpedo stage), and, to a lower extent, in mature leaves.

It is found in the plastid. It localises to the chloroplast. The enzyme catalyses N(6)-biotinyl-L-lysyl-[protein] + hydrogencarbonate + ATP = N(6)-carboxybiotinyl-L-lysyl-[protein] + ADP + phosphate + H(+). It functions in the pathway lipid metabolism; malonyl-CoA biosynthesis; malonyl-CoA from acetyl-CoA: step 1/1. In terms of biological role, this protein is a component of the acetyl coenzyme A carboxylase complex; first, biotin carboxylase catalyzes the carboxylation of the carrier protein and then the transcarboxylase transfers the carboxyl group to form malonyl-CoA. The sequence is that of Biotin carboxylase, chloroplastic (CAC2) from Arabidopsis thaliana (Mouse-ear cress).